The chain runs to 309 residues: Mitochondrial import receptor subunit TOM34 (309 aa).

The residue at position 8 (serine 8) is a Phosphoserine. 3 TPR repeats span residues 9–42, 51–84, and 86–118; these read VEELRAAGNESFRNGQYAEASALYGRALRVLQAQ, SVLYSNRAACHLKDGNCRDCIKDCTSALALVPFS, and KPLLRRASAYEALEKYPMAYVDYKTVLQIDDNV. Serine 160 is subject to Phosphoserine. Residues 161–189 are disordered; that stretch reads LPSENHKEMAKSKSKETTATKNRVPSAGD. Basic and acidic residues predominate over residues 164–178; the sequence is ENHKEMAKSKSKETT. Serine 186 carries the phosphoserine modification. 3 TPR repeats span residues 193-226, 227-260, and 262-294; these read ARVLKEEGNELVKKGNHKKAIEKYSESLLCSNLE, SATYSNRALCYLVLKQYTEAVKDCTEALKLDGKN, and KAFYRRAQAHKALKDYKSSFADISNLLQIEPRN. Lysine 197 is covalently cross-linked (Glycyl lysine isopeptide (Lys-Gly) (interchain with G-Cter in SUMO2)).

It belongs to the Tom34 family. Interacts with HSP90A, VCP, ATP6V1D, KIAA0665, AMPK, and DMAP1 through its TPR repeat. Ubiquitous.

It is found in the cytoplasm. Its subcellular location is the mitochondrion outer membrane. Its function is as follows. Plays a role in the import of cytosolically synthesized preproteins into mitochondria. Binds the mature portion of precursor proteins. Interacts with cellular components, and possesses weak ATPase activity. May be a chaperone-like protein that helps to keep newly synthesized precursors in an unfolded import compatible state. This Homo sapiens (Human) protein is Mitochondrial import receptor subunit TOM34 (TOMM34).